We begin with the raw amino-acid sequence, 917 residues long: Protein translocase subunit SecA (917 aa).

Residues Gln87, 105 to 109 (GEGKT), and Asp516 each bind ATP. The Zn(2+) site is built by Cys901, Cys903, Cys912, and His913.

This sequence belongs to the SecA family. Monomer and homodimer. Part of the essential Sec protein translocation apparatus which comprises SecA, SecYEG and auxiliary proteins SecDF-YajC and YidC. Requires Zn(2+) as cofactor.

Its subcellular location is the cell inner membrane. The protein localises to the cytoplasm. It catalyses the reaction ATP + H2O + cellular proteinSide 1 = ADP + phosphate + cellular proteinSide 2.. Functionally, part of the Sec protein translocase complex. Interacts with the SecYEG preprotein conducting channel. Has a central role in coupling the hydrolysis of ATP to the transfer of proteins into and across the cell membrane, serving both as a receptor for the preprotein-SecB complex and as an ATP-driven molecular motor driving the stepwise translocation of polypeptide chains across the membrane. In Verminephrobacter eiseniae (strain EF01-2), this protein is Protein translocase subunit SecA.